We begin with the raw amino-acid sequence, 124 residues long: Hemoglobin subunit alpha (124 aa).

The region spanning 1–124 is the Globin domain; it reads PLSAADKTII…VAKALSSHYR (124 aa). An O2-binding site is contributed by His-57. His-79 contacts heme b.

Belongs to the globin family. Hb 1 is a heterotetramer of two alpha and two beta-1 chains. Hb 2 is a heterotetramer of two alpha and two beta-2 chains. Hb 3 is a heterotetramer of two alpha and two beta-3 chains. In terms of tissue distribution, red blood cells (at protein level).

Its function is as follows. Involved in oxygen transport from gills to the various peripheral tissues. This chain is Hemoglobin subunit alpha, found in Somniosus microcephalus (Greenland sleeper shark).